The primary structure comprises 249 residues: Tetrahydromethanopterin S-methyltransferase subunit A (249 aa).

Residues Pro2–Thr225 are Cytoplasmic-facing. A 5-hydroxybenzimidazolylcob(I)amide-binding site is contributed by His88. A helical transmembrane segment spans residues Met226–Leu246. Over Gly247–Val249 the chain is Extracellular.

This sequence belongs to the MtrA family. The complex is composed of 8 subunits; MtrA, MtrB, MtrC, MtrD, MtrE, MtrF, MtrG and MtrH. The cofactor is 5-hydroxybenzimidazolylcob(I)amide.

Its subcellular location is the cell membrane. The catalysed reaction is 5-methyl-5,6,7,8-tetrahydromethanopterin + coenzyme M + 2 Na(+)(in) = 5,6,7,8-tetrahydromethanopterin + methyl-coenzyme M + 2 Na(+)(out). The protein operates within one-carbon metabolism; methanogenesis from CO(2); methyl-coenzyme M from 5,10-methylene-5,6,7,8-tetrahydromethanopterin: step 2/2. In terms of biological role, part of a complex that catalyzes the formation of methyl-coenzyme M and tetrahydromethanopterin from coenzyme M and methyl-tetrahydromethanopterin. This is an energy-conserving, sodium-ion translocating step. The polypeptide is Tetrahydromethanopterin S-methyltransferase subunit A (Methanopyrus kandleri (strain AV19 / DSM 6324 / JCM 9639 / NBRC 100938)).